Reading from the N-terminus, the 308-residue chain is UDP-3-O-acyl-N-acetylglucosamine deacetylase (308 aa).

Zn(2+) contacts are provided by histidine 78, histidine 235, and aspartate 239. Catalysis depends on histidine 262, which acts as the Proton donor.

This sequence belongs to the LpxC family. The cofactor is Zn(2+).

It catalyses the reaction a UDP-3-O-[(3R)-3-hydroxyacyl]-N-acetyl-alpha-D-glucosamine + H2O = a UDP-3-O-[(3R)-3-hydroxyacyl]-alpha-D-glucosamine + acetate. Its pathway is glycolipid biosynthesis; lipid IV(A) biosynthesis; lipid IV(A) from (3R)-3-hydroxytetradecanoyl-[acyl-carrier-protein] and UDP-N-acetyl-alpha-D-glucosamine: step 2/6. In terms of biological role, catalyzes the hydrolysis of UDP-3-O-myristoyl-N-acetylglucosamine to form UDP-3-O-myristoylglucosamine and acetate, the committed step in lipid A biosynthesis. The sequence is that of UDP-3-O-acyl-N-acetylglucosamine deacetylase from Anaeromyxobacter dehalogenans (strain 2CP-C).